We begin with the raw amino-acid sequence, 330 residues long: Aspartate--ammonia ligase (330 aa).

The protein belongs to the class-II aminoacyl-tRNA synthetase family. AsnA subfamily.

It is found in the cytoplasm. It catalyses the reaction L-aspartate + NH4(+) + ATP = L-asparagine + AMP + diphosphate + H(+). It functions in the pathway amino-acid biosynthesis; L-asparagine biosynthesis; L-asparagine from L-aspartate (ammonia route): step 1/1. This Glaesserella parasuis serovar 5 (strain SH0165) (Haemophilus parasuis) protein is Aspartate--ammonia ligase.